Consider the following 1580-residue polypeptide: Ras GTPase-activating protein raskol (1580 aa).

Ser-164 is subject to Phosphoserine. A Phosphothreonine modification is found at Thr-167. Residues 197-223 (LKRTKSVTKLERTKRGSGGLRGSRSHE) form a disordered region. 2 positions are modified to phosphoserine: Ser-221 and Ser-224. Residues 233 to 291 (STIDLSCTGAVGVAPVHQSVLGRRHCFQVRGGPRGERYYSCGSRQERDLWIYSLRKSIA) form the PH domain. The C2 domain occupies 282–400 (WIYSLRKSIA…TSRLPCEQWY (119 aa)). In terms of domain architecture, Ras-GAP spans 490-700 (GLAGAFLTDV…ARMQQFLEII (211 aa)). Disordered stretches follow at residues 764–819 (GMGT…QPQH), 857–892 (LLQQQQQQQQQQQQQQQQHQQLQQHGHQQQPHHQHP), 904–1023 (AGNQ…SYDD), 1112–1218 (ANHH…QQFG), 1284–1313 (LSGGSSSSTSASASTSNLGKSGGSSAYGRL), 1334–1443 (VGYG…LGKS), and 1561–1580 (YETQQQQQQHQAPPKTQKPQ). Residues 776-805 (ATSSTHSIASENQENRNPGSSGSHAGSNSE) show a composition bias toward polar residues. Low complexity-rich tracts occupy residues 806–818 (QLLPQQSQLAQPQ), 857–885 (LLQQQQQQQQQQQQQQQQHQQLQQHGHQQ), and 926–939 (SSSLNGSSSNLLHG). Residues 940-954 (HQQHAHHPQQLHPHH) show a composition bias toward basic residues. The segment covering 987 to 1020 (TSTPSSTRSRTLPRNGNPNANGNVGSSNNNQSGS) has biased composition (low complexity). The segment covering 1140 to 1150 (SAKSSHCSSGY) has biased composition (polar residues). The span at 1151–1169 (QSISTNPSPSQSSSPVESQ) shows a compositional bias: low complexity. Phosphoserine occurs at positions 1158 and 1164. Residues 1186–1206 (PSYQLQPQTGSSRSSAQSNTH) are compositionally biased toward polar residues. 3 stretches are compositionally biased toward low complexity: residues 1207–1216 (QQQQQQQQQQ), 1285–1299 (SGGSSSSTSASASTS), and 1351–1362 (HQQQQNPMQQQQ). Over residues 1363–1372 (QRERDQEHKQ) the composition is skewed to basic and acidic residues. Over residues 1374–1388 (AGSVAGSVGSATSAA) the composition is skewed to low complexity. Residues 1396–1415 (SARTLSDSSTDTEGHCNQLQ) are compositionally biased toward polar residues. Phosphoserine is present on residues Ser-1401 and Ser-1403. Residues 1427-1438 (GGSGGGGAGSEQ) show a composition bias toward gly residues. The segment covering 1563-1580 (TQQQQQQHQAPPKTQKPQ) has biased composition (low complexity).

It localises to the cytoplasm. Its subcellular location is the cell membrane. It is found in the apical cell membrane. In terms of biological role, GTPase-activating protein, which acts as a negative regulator for some members of the Ras family. Probably decreases their signaling activity by stimulating their intrinsic GTPase activity, thereby lowering the levels of the GTP-bound active form. Functions with DE-cadherin (shg) to promote embryonic border cell (BC) migration and adhesion by regulating the distribution of actin protrusions in BCs. Promotes shg-mediated adhesion at the BC interfaces and likely maintains BC cluster adhesion during BC detachment from the follicular epithelium and subsequent BC migration. Also required for restricting the development of actin-rich protrusions to the front of migrating BC clusters thus ensuring unidirectional BC migration. Possibly functions by suppressing Rac1 signaling in non-leading BCs, thus limiting its activity to leading BCs where it initiates localized actin cytoskeleton remodeling to produce the polarized protrusions. The polypeptide is Ras GTPase-activating protein raskol (Drosophila melanogaster (Fruit fly)).